A 917-amino-acid polypeptide reads, in one-letter code: MLX-interacting protein (917 aa).

The disordered stretch occupies residues 1–72 (MAADVFMCSP…AGPGREEPPR (72 aa)). An N-acetylalanine modification is found at Ala2. 3 positions are modified to phosphoserine: Ser9, Ser33, and Ser39. The segment covering 27–37 (PEDDDDSDTDE) has biased composition (acidic residues). Low complexity predominate over residues 47 to 57 (ATSARAHASAA). The required for cytoplasmic localization stretch occupies residues 73 to 327 (RQQIIHSGHF…PLQPNLDFMD (255 aa)). The tract at residues 322–445 (NLDFMDTFEP…LLSPGPAPAP (124 aa)) is transactivation domain. Disordered regions lie at residues 347–402 (LPPP…CERT) and 632–711 (SHST…TDPK). Positions 378 to 388 (LPNSLITSSAA) are enriched in polar residues. Positions 632 to 643 (SHSTSSQPSPVS) are enriched in low complexity. Ser667 is subject to Phosphoserine. Residues 670 to 685 (VPATGSSRDCPNSGQA) are compositionally biased toward polar residues. Positions 686–704 (SPCPSEQSPSPQSPQNNCS) are enriched in low complexity. Residues 717-767 (KNRQKHISAEQKRRFNIRMGFNTLNSLISNNSKQTSHAITLQKTMEYITKL) enclose the bHLH domain. The tract at residues 767 to 788 (LQQERMQMQEEARRLREEIEEL) is leucine-zipper. The segment at 830-879 (WKFWIFSMIIKPLFESFKGMVSTSSLEEFHRTALSWLDQHCSLPVLRPMV) is mediates heterotypic interactions between MLXIP and MLX and is required for cytoplasmic localization. Residues 897–917 (SQLPEQASEAVTRMGKRSGES) are disordered.

As to quaternary structure, efficient DNA binding requires dimerization with another bHLH protein. Binds DNA as a homodimer or a heterodimer with MLX/TCFL4.

It is found in the cytoplasm. The protein localises to the nucleus. It localises to the mitochondrion outer membrane. Functionally, binds DNA as a heterodimer with MLX/TCFL4 and activates transcription. Binds to the canonical E box sequence 5'-CACGTG-3'. Plays a role in transcriptional activation of glycolytic target genes. Involved in glucose-responsive gene regulation. Regulates transcription in response to changes in cellular carbohydrate abundance such as occurs during fasting to feeding metabolic transition. Refeeding stimulates MLXIPL/ChREBP transcription factor, leading to increased BCKDK to PPM1K expression ratio, phosphorylation and activation of ACLY that ultimately results in the generation of malonyl-CoA and oxaloacetate immediate substrates of de novo lipogenesis and gluconeogenesis, respectively. The polypeptide is MLX-interacting protein (Mus musculus (Mouse)).